Reading from the N-terminus, the 78-residue chain is Myrmicitoxin-Ta2a (78 aa).

Positions 1–26 are cleaved as a signal peptide; sequence MKLSFLSLALAIIFVTVLIYAPQAEA. Residues 27–56 constitute a propeptide that is removed on maturation; it reads KALADAVADADADADAAADAVADALADADA. Lys77 is modified (lysine amide).

The protein belongs to the formicidae venom precursor-01 superfamily. As to expression, expressed by the venom gland.

Its subcellular location is the secreted. In terms of biological role, peptide with toxicity towards insects that may also act as antimicrobial peptide. Causes calcium influx in F11 cells (EC(50)=5.8 nM), possibly by modulating sodium channels (Nav). In vivo, is lethal to insects, but does not show toxicity to vertebrates. Intraplantar injection into mice does not induce spontaneous nocifensive behaviors up to a dose of 200 pmol. The chain is Myrmicitoxin-Ta2a from Tetramorium africanum (Fierce ant).